Consider the following 274-residue polypeptide: 3-methyl-2-oxobutanoate hydroxymethyltransferase (274 aa).

Positions 49 and 88 each coordinate Mg(2+). 3-methyl-2-oxobutanoate is bound by residues 49-50 (DS), Asp-88, and Lys-118. Glu-120 serves as a coordination point for Mg(2+). Glu-187 (proton acceptor) is an active-site residue.

Belongs to the PanB family. Homodecamer; pentamer of dimers. Mg(2+) is required as a cofactor.

It is found in the cytoplasm. It catalyses the reaction 3-methyl-2-oxobutanoate + (6R)-5,10-methylene-5,6,7,8-tetrahydrofolate + H2O = 2-dehydropantoate + (6S)-5,6,7,8-tetrahydrofolate. Its pathway is cofactor biosynthesis; (R)-pantothenate biosynthesis; (R)-pantoate from 3-methyl-2-oxobutanoate: step 1/2. In terms of biological role, catalyzes the reversible reaction in which hydroxymethyl group from 5,10-methylenetetrahydrofolate is transferred onto alpha-ketoisovalerate to form ketopantoate. This Rhodopseudomonas palustris (strain TIE-1) protein is 3-methyl-2-oxobutanoate hydroxymethyltransferase.